The sequence spans 91 residues: Early E3B 10.4 kDa protein (91 aa).

A signal peptide spans 1–22 (MIPRVLILLTLVALFCACSTLA). Over 23–34 (AVAHIEVDCIPP) the chain is Lumenal. A helical transmembrane segment spans residues 35–60 (FTVYLLYGFVTLILICSLVTVVIAFI). At 61 to 91 (QFIDWICVRIAYLRHHPQYRDRTIADLLRIL) the chain is on the cytoplasmic side.

It belongs to the adenoviridae E3B family.

It localises to the host endoplasmic reticulum membrane. Its function is as follows. Down-regulates the EGF receptor. This is Early E3B 10.4 kDa protein from Homo sapiens (Human).